The sequence spans 677 residues: Methionine--tRNA ligase (677 aa).

The 'HIGH' region signature appears at 15-25 (PYANGSIHLGH). Zn(2+) is bound by residues Cys-146, Cys-149, Cys-159, and Cys-162. A 'KMSKS' region motif is present at residues 333–337 (KMSKS). ATP is bound at residue Lys-336. One can recognise a tRNA-binding domain in the interval 575 to 677 (DFAKVDLRVA…AGAKPGHQVK (103 aa)).

The protein belongs to the class-I aminoacyl-tRNA synthetase family. MetG type 1 subfamily. Homodimer. Zn(2+) serves as cofactor.

It localises to the cytoplasm. It catalyses the reaction tRNA(Met) + L-methionine + ATP = L-methionyl-tRNA(Met) + AMP + diphosphate. Functionally, is required not only for elongation of protein synthesis but also for the initiation of all mRNA translation through initiator tRNA(fMet) aminoacylation. The protein is Methionine--tRNA ligase of Escherichia coli O17:K52:H18 (strain UMN026 / ExPEC).